Here is a 295-residue protein sequence, read N- to C-terminus: Indole-3-glycerol phosphate synthase (295 aa).

This sequence belongs to the TrpC family.

It catalyses the reaction 1-(2-carboxyphenylamino)-1-deoxy-D-ribulose 5-phosphate + H(+) = (1S,2R)-1-C-(indol-3-yl)glycerol 3-phosphate + CO2 + H2O. The protein operates within amino-acid biosynthesis; L-tryptophan biosynthesis; L-tryptophan from chorismate: step 4/5. This chain is Indole-3-glycerol phosphate synthase, found in Prochlorococcus marinus (strain NATL2A).